A 199-amino-acid polypeptide reads, in one-letter code: NAD(P)H dehydrogenase (quinone) (199 aa).

One can recognise a Flavodoxin-like domain in the interval 4 to 190; that stretch reads ILVLYYSMYG…AIARFQGEHV (187 aa). FMN is bound by residues 10–15 and 79–81; these read SMYGHI and TRF. Tyr-12 contributes to the NAD(+) binding site. Substrate is bound at residue Trp-99. FMN contacts are provided by residues 114–119 and His-134; that span reads STGTGG.

It belongs to the WrbA family. FMN is required as a cofactor.

The enzyme catalyses a quinone + NADH + H(+) = a quinol + NAD(+). It carries out the reaction a quinone + NADPH + H(+) = a quinol + NADP(+). The polypeptide is NAD(P)H dehydrogenase (quinone) (Yersinia pseudotuberculosis serotype O:1b (strain IP 31758)).